The chain runs to 378 residues: Histidinol-phosphate aminotransferase 2 (378 aa).

K240 is modified (N6-(pyridoxal phosphate)lysine).

This sequence belongs to the class-II pyridoxal-phosphate-dependent aminotransferase family. Histidinol-phosphate aminotransferase subfamily. Homodimer. The cofactor is pyridoxal 5'-phosphate.

It catalyses the reaction L-histidinol phosphate + 2-oxoglutarate = 3-(imidazol-4-yl)-2-oxopropyl phosphate + L-glutamate. It participates in amino-acid biosynthesis; L-histidine biosynthesis; L-histidine from 5-phospho-alpha-D-ribose 1-diphosphate: step 7/9. This chain is Histidinol-phosphate aminotransferase 2 (hisC2), found in Caulobacter vibrioides (strain ATCC 19089 / CIP 103742 / CB 15) (Caulobacter crescentus).